The primary structure comprises 329 residues: Src kinase-associated phosphoprotein 2 (329 aa).

A disordered region spans residues 58-95; the sequence is YAEDSEEEEDWDSNEGGSLQSERTDKDEEACEGAQQAP. Residues 61 to 70 are compositionally biased toward acidic residues; the sequence is DSEEEEDWDS. In terms of domain architecture, PH spans 104–207; that stretch reads SVFKAGYLEK…WVKQIDFVLK (104 aa). The tract at residues 240–263 is disordered; it reads EDMPSPPPKVEPVSKHPPPTPAVD. Residues 243–260 show a composition bias toward pro residues; sequence PSPPPKVEPVSKHPPPTP. The SH3 domain occupies 267-328; it reads DYANYYQGLW…PKDYLMELYA (62 aa).

The protein belongs to the SKAP family. Post-translationally, phosphorylated on tyrosines.

Its subcellular location is the cytoplasm. Its function is as follows. May be involved in B-cell and macrophage adhesion processes. May play a role in src signaling pathway. This is Src kinase-associated phosphoprotein 2 (skap2) from Takifugu rubripes (Japanese pufferfish).